We begin with the raw amino-acid sequence, 438 residues long: tRNA(Ile)-lysidine synthase (438 aa).

Residue Ser-27–Ser-32 participates in ATP binding.

This sequence belongs to the tRNA(Ile)-lysidine synthase family.

The protein resides in the cytoplasm. The catalysed reaction is cytidine(34) in tRNA(Ile2) + L-lysine + ATP = lysidine(34) in tRNA(Ile2) + AMP + diphosphate + H(+). In terms of biological role, ligates lysine onto the cytidine present at position 34 of the AUA codon-specific tRNA(Ile) that contains the anticodon CAU, in an ATP-dependent manner. Cytidine is converted to lysidine, thus changing the amino acid specificity of the tRNA from methionine to isoleucine. The chain is tRNA(Ile)-lysidine synthase from Vibrio parahaemolyticus serotype O3:K6 (strain RIMD 2210633).